Here is a 259-residue protein sequence, read N- to C-terminus: Dickkopf-related protein 2 (259 aa).

The signal sequence occupies residues 1–33 (MAALMRSKDSSCCLLLLAAVLMVESSQIGSSRA). The N-linked (GlcNAc...) asparagine glycan is linked to N52. The DKK-type Cys-1 stretch occupies residues 78–127 (CSSDKECEVGRYCHSPHQGSSACMVCRRKKKRCHRDGMCCPSTRCNNGIC). 5 disulfides stabilise this stretch: C183–C195, C189–C204, C194–C231, C214–C239, and C233–C256. The interval 183-256 (CLRSSDCIEG…YSSKARLHVC (74 aa)) is DKK-type Cys-2.

Belongs to the dickkopf family. In terms of assembly, interacts with LRP5 and LRP6. Post-translationally, may be proteolytically processed by a furin-like protease. As to expression, expressed in heart, brain, skeletal muscle and lung.

The protein localises to the secreted. In terms of biological role, antagonizes canonical Wnt signaling by inhibiting LRP5/6 interaction with Wnt and by forming a ternary complex with the transmembrane protein KREMEN that promotes internalization of LRP5/6. DKKs play an important role in vertebrate development, where they locally inhibit Wnt regulated processes such as antero-posterior axial patterning, limb development, somitogenesis and eye formation. In the adult, Dkks are implicated in bone formation and bone disease, cancer and Alzheimer disease. This chain is Dickkopf-related protein 2 (DKK2), found in Homo sapiens (Human).